A 929-amino-acid polypeptide reads, in one-letter code: Lon protease homolog 2, peroxisomal (929 aa).

Residues 11-257 (LPLVPLPKGS…RVVEILTRQL (247 aa)) form the Lon N-terminal domain. The interval 302 to 325 (GLTPPGLSAGRNNDNDDKESNEVD) is disordered. 484–491 (GPPGVGKT) lines the ATP pocket. Residues 727–914 (HGRPGVVTGL…WEAIRQVWPD (188 aa)) enclose the Lon proteolytic domain. Active-site residues include S820 and K863. A Microbody targeting signal motif is present at residues 927 to 929 (SRL).

This sequence belongs to the peptidase S16 family.

The protein localises to the peroxisome matrix. It catalyses the reaction Hydrolysis of proteins in presence of ATP.. Its function is as follows. ATP-dependent serine protease that mediates the selective degradation of misfolded and unassembled polypeptides in the peroxisomal matrix. Necessary for type 2 peroxisome targeting signal (PTS2)-containing protein processing and facilitates peroxisome matrix protein import. This is Lon protease homolog 2, peroxisomal from Aspergillus niger (strain ATCC MYA-4892 / CBS 513.88 / FGSC A1513).